We begin with the raw amino-acid sequence, 485 residues long: MVSSLSRNGNSHHNGVNVAITSGFSTKLAPLPNGPLFGTDGIRGKAGDLLTAPFALELGFWAGQVLKANKVTPGPVIIGQDSRNSSDMLAMAMAAGLTSAGLEVWNLGLCPTPCVAHLTRISQAMGGIMISASHNPPEDNGIKFFNHEGTKLSQTLAQQIEDGLRGHLSFDRDRNREWGKTYHQANLVDTYCQFLQETLPENLDLQGMRVVLDLAWGASVEVAPKLFKALGAEVICLHDRPDGNRINVNCGSTHLDLLQQAIKEHQADLGFAFDGDADRVMAVDSQGRVVDGDYILYLWGKHLLEQGKLPHNLLIGTVMANLGFERAWEALGGQLMRTAVGDRHVQAQMWETGAILGGEQSGHIICHHHSFSGDGVQTALHLAALVRQSGESLATLVNESFQTYPQILRNIRVEDRDRRRYWQECTPVMEAVNQAEAAMGNTGRILVRPSGTEPLIRVMVESCSADDANYWVNYLVNVVEQHLAN.

Serine 133 serves as the catalytic Phosphoserine intermediate. Residues serine 133, aspartate 274, aspartate 276, and aspartate 278 each contribute to the Mg(2+) site. At serine 133 the chain carries Phosphoserine.

The protein belongs to the phosphohexose mutase family. It depends on Mg(2+) as a cofactor. Activated by phosphorylation.

It carries out the reaction alpha-D-glucosamine 1-phosphate = D-glucosamine 6-phosphate. Catalyzes the conversion of glucosamine-6-phosphate to glucosamine-1-phosphate. The sequence is that of Phosphoglucosamine mutase from Rippkaea orientalis (strain PCC 8801 / RF-1) (Cyanothece sp. (strain PCC 8801)).